Here is a 331-residue protein sequence, read N- to C-terminus: Nucleotide sugar transporter SLC35B4 (331 aa).

11 helical membrane passes run 4–24 (ALAV…LELL), 30–50 (GCGN…GFLF), 59–79 (PAIP…VSVV), 92–112 (LHMI…IIIL), 117–137 (SIFK…CTFM), 153–173 (GFQA…ALLM), 201–221 (ALPL…AVLF), 229–249 (IPVI…NIIT), 251–267 (YVCI…CASL), 268–288 (TVTL…ILYF), and 291–311 (PFTL…LMYT). A Mediates endoplasmic reticulum retention motif is present at residues 326–331 (KDSKKN).

This sequence belongs to the nucleotide-sugar transporter family. SLC35B subfamily.

It localises to the endoplasmic reticulum membrane. It catalyses the reaction UDP-N-acetyl-alpha-D-glucosamine(in) + UDP-alpha-D-glucuronate(out) = UDP-N-acetyl-alpha-D-glucosamine(out) + UDP-alpha-D-glucuronate(in). It carries out the reaction UDP-alpha-D-xylose(in) + UDP-alpha-D-glucuronate(out) = UDP-alpha-D-xylose(out) + UDP-alpha-D-glucuronate(in). In terms of biological role, antiporter that transports nucleotide sugars across the endoplasmic reticulum (ER) membrane in exchange for another nucleotide sugar. May couple UDP-alpha-D-glucuronate (UDP-GlcA) or UDP-alpha-D-xylose (UDP-Xyl) efflux to UDP-alpha-D-glucuronate (UDP-GlcA) influx into the ER lumen, which in turn stimulates glucuronidation and excretion of endobiotics and xenobiotics. Functionally, has UDP-GlcA:UDP-GlcNAc antiporter activity. The protein is Nucleotide sugar transporter SLC35B4 (SLC35B4) of Homo sapiens (Human).